The following is a 31-amino-acid chain: Phallacidin proprotein 1 (31 aa).

Positions M1 to P10 are excised as a propeptide. Residues A11–P17 constitute a cross-link (cyclopeptide (Ala-Pro)). The segment at residues W12 to C16 is a cross-link (2'-cysteinyl-6'-hydroxytryptophan sulfoxide (Trp-Cys)). Residues C18–E31 constitute a propeptide that is removed on maturation.

The protein belongs to the MSDIN fungal toxin family. Processed by the macrocyclase-peptidase enzyme POPB to yield a toxic cyclic heptapeptide. POPB first removes 10 residues from the N-terminus. Conformational trapping of the remaining peptide forces the enzyme to release this intermediate rather than proceed to macrocyclization. The enzyme rebinds the remaining peptide in a different conformation and catalyzes macrocyclization of the N-terminal 7 residues.

Its function is as follows. Major toxin that belongs to the bicyclic heptapeptides called phallotoxins. Although structurally related to amatoxins, phallotoxins have a different mode of action, which is the stabilization of F-actin. Phallotoxins are poisonous when administered parenterally, but not orally because of poor absorption. The chain is Phallacidin proprotein 1 (PHA1_2) from Amanita bisporigera (Destroying angel).